Reading from the N-terminus, the 488-residue chain is Fumarate hydratase (488 aa).

Residues Ser-105, Ser-147, Asn-148, Thr-194, and His-195 each coordinate (S)-malate. The active-site Proton donor/acceptor is His-195. Ser-340 is an active-site residue. Positions 341, 346, and 348 each coordinate (S)-malate.

This sequence belongs to the class-II fumarase/aspartase family. Fumarase subfamily. Homotetramer.

Its subcellular location is the cytoplasm. It is found in the cytosol. The enzyme catalyses (S)-malate = fumarate + H2O. In terms of biological role, catalyzes the reversible stereospecific interconversion of fumarate to L-malate. Fumarate metabolism in the cytosol plays a role during urea cycle and arginine metabolism; fumarate being a by-product of the urea cycle and amino-acid catabolism. This is Fumarate hydratase from Schistosoma mansoni (Blood fluke).